The primary structure comprises 582 residues: DnaJ protein ERDJ3A (582 aa).

Residues 1 to 25 (MGIPVRSLLVASIVLSSIALHVAAA) form the signal peptide. The J domain occupies 29–93 (DPYKVLGVDK…EKRKNYDLYG (65 aa)). Residue N61 is glycosylated (N-linked (GlcNAc...) asparagine). Residues 178 to 201 (GGSQHTGSAGKARRGTKSSGHDSS) are disordered. Residues 407-437 (VKDLRSGIKELKNLLENFEKKNKKLASNQAK) adopt a coiled-coil conformation.

Interacts with BIP5.

The protein localises to the endoplasmic reticulum. It is found in the vacuole. In terms of biological role, may play a role in protein folding in the endoplasmic reticulum. The polypeptide is DnaJ protein ERDJ3A (Oryza sativa subsp. japonica (Rice)).